The following is a 364-amino-acid chain: A-type ATP synthase subunit C (364 aa).

This sequence belongs to the V-ATPase V0D/AC39 subunit family. In terms of assembly, has multiple subunits with at least A(3), B(3), C, D, E, F, H, I and proteolipid K(x).

It is found in the cell membrane. Component of the A-type ATP synthase that produces ATP from ADP in the presence of a proton gradient across the membrane. The chain is A-type ATP synthase subunit C from Desulfurococcus sp. (strain SY).